Here is a 208-residue protein sequence, read N- to C-terminus: LexA repressor (208 aa).

Positions 29 to 49 form a DNA-binding region, H-T-H motif; it reads VREICSAVGLSSTSTVHGHIS. Catalysis depends on for autocatalytic cleavage activity residues S129 and K167.

It belongs to the peptidase S24 family. As to quaternary structure, homodimer.

It carries out the reaction Hydrolysis of Ala-|-Gly bond in repressor LexA.. Its function is as follows. Represses a number of genes involved in the response to DNA damage (SOS response), including recA and lexA. In the presence of single-stranded DNA, RecA interacts with LexA causing an autocatalytic cleavage which disrupts the DNA-binding part of LexA, leading to derepression of the SOS regulon and eventually DNA repair. The polypeptide is LexA repressor (Limosilactobacillus reuteri (strain DSM 20016) (Lactobacillus reuteri)).